Here is a 256-residue protein sequence, read N- to C-terminus: Hydroxyacylglutathione hydrolase (256 aa).

7 residues coordinate Zn(2+): His58, His60, Asp62, His63, His116, Asp135, and His173.

It belongs to the metallo-beta-lactamase superfamily. Glyoxalase II family. Monomer. The cofactor is Zn(2+).

The catalysed reaction is an S-(2-hydroxyacyl)glutathione + H2O = a 2-hydroxy carboxylate + glutathione + H(+). Its pathway is secondary metabolite metabolism; methylglyoxal degradation; (R)-lactate from methylglyoxal: step 2/2. Thiolesterase that catalyzes the hydrolysis of S-D-lactoyl-glutathione to form glutathione and D-lactic acid. This chain is Hydroxyacylglutathione hydrolase, found in Hyphomonas neptunium (strain ATCC 15444).